We begin with the raw amino-acid sequence, 470 residues long: Auxin transporter-like protein 3 (470 aa).

The Cytoplasmic segment spans residues 1–57; the sequence is MAAEKIETVVAGNYLEMEREEENISGNKKSSTKTKLSNFFWHGGSVYDAWFSCASNQ. Residues 58-75 traverse the membrane as a helical segment; sequence VAQVLLTLPYSFSQLGMM. Residues 76-77 lie on the Extracellular side of the membrane; the sequence is SG. A helical membrane pass occupies residues 78-98; that stretch reads ILFQLFYGLMGSWTAYLISVL. The Cytoplasmic portion of the chain corresponds to 99–134; sequence YVEYRTRKEREKFDFRNHVIQWFEVLDGLLGKHWRN. The helical transmembrane segment at 135 to 155 threads the bilayer; sequence LGLIFNCTFLLFGSVIQLIAC. At 156 to 170 the chain is on the extracellular side; that stretch reads ASNIYYINDKLDKRT. A helical transmembrane segment spans residues 171-191; that stretch reads WTYIFGACCATTVFIPSFHNY. Arg-192 is a topological domain (cytoplasmic). Residues 193-213 form a helical membrane-spanning segment; sequence IWSFLGLAMTTYTSWYLTIAS. Residues 214–230 are Extracellular-facing; sequence LLHGQAEDVKHSGPTTM. A helical transmembrane segment spans residues 231 to 251; it reads VLYFTGATNILYTFGGHAVTV. The Cytoplasmic segment spans residues 252 to 264; the sequence is EIMHAMWKPQKFK. The helical transmembrane segment at 265–285 threads the bilayer; the sequence is AIYLLATIYVLTLTLPSASAV. The Extracellular portion of the chain corresponds to 286–312; sequence YWAFGDKLLTHSNALSLLPKTGFRDTA. The chain crosses the membrane as a helical span at residues 313–333; sequence VILMLIHQFITFGFASTPLYF. At 334–354 the chain is on the cytoplasmic side; sequence VWEKLIGVHETKSMFKRAMAR. Residues 355-375 form a helical membrane-spanning segment; sequence LPVVVPIWFLAIIFPFFGPIN. Residue Ser-376 is a topological domain, extracellular. The chain crosses the membrane as a helical span at residues 377 to 397; it reads AVGSLLVSFTVYIIPALAHML. The Cytoplasmic portion of the chain corresponds to 398–426; that stretch reads TFAPAPSRENAVERPPRVVGGWMGTYCIN. Residues 427-447 form a helical membrane-spanning segment; the sequence is IFVVVWVFVVGFGFGGWASMV. Topologically, residues 448–470 are extracellular; the sequence is NFVRQIDTFGLFTKCYQCPPHKP.

It belongs to the amino acid/polyamine transporter 2 family. Amino acid/auxin permease (AAAP) (TC 2.A.18.1) subfamily.

The protein localises to the cell membrane. Carrier protein involved in proton-driven auxin influx. Mediates the formation of auxin gradient from developing leaves (site of auxin biosynthesis) to tips by contributing to the loading of auxin in vascular tissues and facilitating acropetal (base to tip) auxin transport within inner tissues of the root apex, and basipetal (tip to base) auxin transport within outer tissues of the root apex. This Arabidopsis thaliana (Mouse-ear cress) protein is Auxin transporter-like protein 3 (LAX3).